The sequence spans 673 residues: UPF0313 protein blr7973 (673 aa).

In terms of domain architecture, Radical SAM core spans 332–611 (AWDMIKFSVT…KAFLRYHDPD (280 aa)). Residues cysteine 346, cysteine 350, and cysteine 353 each coordinate [4Fe-4S] cluster. Residues 632-673 (RPDQLVPAHQPPGTGKAAGTRRPVRPGGKTQRFTTKGLRVMK) form a disordered region.

The protein belongs to the UPF0313 family. [4Fe-4S] cluster serves as cofactor.

This Bradyrhizobium diazoefficiens (strain JCM 10833 / BCRC 13528 / IAM 13628 / NBRC 14792 / USDA 110) protein is UPF0313 protein blr7973.